A 135-amino-acid chain; its full sequence is uncharacterized protein (135 aa).

The interval 1–80 (MRSSSLPGAR…QRGSCASANA (80 aa)) is disordered. Gly residues predominate over residues 54 to 65 (GARGGGRRGWGG).

This is an uncharacterized protein from Homo sapiens (Human).